Reading from the N-terminus, the 144-residue chain is 3-dehydroquinate dehydratase (144 aa).

Tyr22 acts as the Proton acceptor in catalysis. Positions 71, 77, and 84 each coordinate substrate. Residue His97 is the Proton donor of the active site. Substrate contacts are provided by residues 98-99 (IS) and Arg108.

This sequence belongs to the type-II 3-dehydroquinase family. Homododecamer.

The catalysed reaction is 3-dehydroquinate = 3-dehydroshikimate + H2O. Its pathway is metabolic intermediate biosynthesis; chorismate biosynthesis; chorismate from D-erythrose 4-phosphate and phosphoenolpyruvate: step 3/7. Functionally, catalyzes a trans-dehydration via an enolate intermediate. This is 3-dehydroquinate dehydratase from Thermotoga petrophila (strain ATCC BAA-488 / DSM 13995 / JCM 10881 / RKU-1).